The chain runs to 1340 residues: Iron-sulfur cluster assembly protein SufD (1340 aa).

Positions 477-487 (NSLKHNNNNTK) are enriched in low complexity. Disordered regions lie at residues 477–498 (NSLK…ERSS), 723–743 (HGKD…NYLN), 765–794 (NVST…QSTV), 835–865 (EKNE…GEKK), and 992–1055 (NIPT…NNIQ). A compositionally biased stretch (basic and acidic residues) spans 723-734 (HGKDNTQHDDKN). The segment covering 782–794 (NPDTETNNEQSTV) has biased composition (polar residues). Residues 1022 to 1037 (DNLLQNDQATNSNVEI) are compositionally biased toward polar residues.

It belongs to the iron-sulfur cluster assembly SufBD family. As to quaternary structure, component of a complex composed of SufB, SufC and SufD in a stoichiometric ratio of 1:2:1. Interacts with SufB. Interacts with SufC; the interaction enhances the ATPase activity of SufC.

It localises to the plastid. Its subcellular location is the apicoplast. The protein operates within cofactor biosynthesis; iron-sulfur cluster biosynthesis. Participates in the sulfur mobilization (SUF) pathway for iron-sulfur (Fe-S) cluster biogenesis. As part of a complex consisting of SufB-SufC(2)-SufD, involved in assembly of [4Fe-4S] clusters. Enhances the ATPase activity of SufC. The chain is Iron-sulfur cluster assembly protein SufD from Plasmodium berghei (strain Anka).